An 86-amino-acid polypeptide reads, in one-letter code: MALNIKDPEVDRLAAELADRLHTSKTAAIRHALSAQLAFLESRAGDREAQLLDILRTEIWPLLADRSPITKLEREQILGYDPATGV.

Its function is as follows. Possibly the antitoxin component of a type II toxin-antitoxin (TA) system. Its cognate toxin is VapC36 (Potential). The polypeptide is Putative antitoxin VapB36 (vapB36) (Mycobacterium tuberculosis (strain CDC 1551 / Oshkosh)).